The following is a 197-amino-acid chain: tRNA(Phe) 7-((3-amino-3-carboxypropyl)-4-demethylwyosine(37)-N(4))-methyltransferase (197 aa).

It belongs to the TYW3 family.

The catalysed reaction is 4-demethyl-7-[(3S)-3-amino-3-carboxypropyl]wyosine(37) in tRNA(Phe) + S-adenosyl-L-methionine = 7-[(3S)-3-amino-3-carboxypropyl]wyosine(37) in tRNA(Phe) + S-adenosyl-L-homocysteine + H(+). S-adenosyl-L-methionine-dependent methyltransferase that acts as a component of the wyosine derivatives biosynthesis pathway. Probably methylates N-4 position of wybutosine-86 to produce wybutosine-72. The chain is tRNA(Phe) 7-((3-amino-3-carboxypropyl)-4-demethylwyosine(37)-N(4))-methyltransferase from Thermococcus sibiricus (strain DSM 12597 / MM 739).